Consider the following 38-residue polypeptide: Photosystem II reaction center protein X 1 (38 aa).

The chain crosses the membrane as a helical span at residues 8–28 (FLWSLLYGAVVLGLLFGAIVF).

This sequence belongs to the PsbX family. Type 1 subfamily. In terms of assembly, PSII is composed of 1 copy each of membrane proteins PsbA, PsbB, PsbC, PsbD, PsbE, PsbF, PsbH, PsbI, PsbJ, PsbK, PsbL, PsbM, PsbT, PsbX, PsbY, PsbZ, Psb30/Ycf12, peripheral proteins PsbO, CyanoQ (PsbQ), PsbU, PsbV and a large number of cofactors. It forms dimeric complexes.

Its subcellular location is the cellular thylakoid membrane. In terms of biological role, involved in the binding and/or turnover of quinones at the Q(B) site of photosystem II (PSII). PSII is a light-driven water plastoquinone oxidoreductase, using light energy to abstract electrons from H(2)O, generating a proton gradient subsequently used for ATP formation. The sequence is that of Photosystem II reaction center protein X 1 from Synechococcus sp. (strain JA-3-3Ab) (Cyanobacteria bacterium Yellowstone A-Prime).